Consider the following 837-residue polypeptide: Protein translocase subunit SecA (837 aa).

ATP contacts are provided by residues Gln85, 103–107 (GEGKT), and Asp493. Positions 821, 823, 832, and 833 each coordinate Zn(2+).

The protein belongs to the SecA family. Monomer and homodimer. Part of the essential Sec protein translocation apparatus which comprises SecA, SecYEG and auxiliary proteins SecDF. Other proteins may also be involved. The cofactor is Zn(2+).

The protein resides in the cell membrane. It is found in the cytoplasm. It catalyses the reaction ATP + H2O + cellular proteinSide 1 = ADP + phosphate + cellular proteinSide 2.. Part of the Sec protein translocase complex. Interacts with the SecYEG preprotein conducting channel. Has a central role in coupling the hydrolysis of ATP to the transfer of proteins into and across the cell membrane, serving as an ATP-driven molecular motor driving the stepwise translocation of polypeptide chains across the membrane. The chain is Protein translocase subunit SecA from Streptococcus pneumoniae (strain Taiwan19F-14).